The chain runs to 622 residues: E3 ubiquitin-protein ligase RNF12-A (622 aa).

Disordered regions lie at residues methionine 1–leucine 26, arginine 67–arginine 386, and asparagine 473–glycine 514. Positions serine 11–serine 21 are enriched in low complexity. Polar residues-rich tracts occupy residues serine 110–serine 138 and isoleucine 147–glutamine 163. The segment covering arginine 216–isoleucine 242 has biased composition (basic and acidic residues). Residues histidine 247–serine 256 are compositionally biased toward polar residues. Low complexity predominate over residues serine 272–arginine 289. The span at valine 300–glutamate 317 shows a compositional bias: polar residues. A compositionally biased stretch (low complexity) spans threonine 318–threonine 331. Positions asparagine 332–arginine 341 are enriched in polar residues. Basic and acidic residues predominate over residues arginine 355–isoleucine 365. Residues alanine 366–tyrosine 382 are compositionally biased toward polar residues. Residues cysteine 568–arginine 609 form an RING-type; atypical zinc finger. A PDZ-binding motif is present at residues glutamate 619–valine 622.

The protein belongs to the RNF12 family. Forms homodimers through the C-terminal region. The N-terminus interacts with the homeobox of LIM/homeobox factor lhx1/lim1, with lhx3/lim3 and lhx5/lim5, and with the N-terminus of ldb1. Shows overlapping expression with lhx1/lim1 and ldb1 in the gastrula mesoderm, and expression overlaps with ldb1 throughout early embryogenesis. After gastrulation, expression is gradually restricted to tissues originated from the ectoderm, the neuroectoderm, neural crest and epidermis, and subsequently to the neural tube as well as the head and tailbud region.

It is found in the nucleus. The catalysed reaction is S-ubiquitinyl-[E2 ubiquitin-conjugating enzyme]-L-cysteine + [acceptor protein]-L-lysine = [E2 ubiquitin-conjugating enzyme]-L-cysteine + N(6)-ubiquitinyl-[acceptor protein]-L-lysine.. It functions in the pathway protein modification; protein ubiquitination. Its function is as follows. Acts as an E3 ubiquitin-protein ligase specific for ldb1, mediating ubiquitination and proteasome-dependent degradation of excess ldb1 in a RING-dependent manner. Does not degrade ldb1 bound to lhx1/lim1, nor lim1 itself and thus contributes to the establishment of proper ldb1-lhx1/lim1 stoichiometry and the formation of a ldb1-lhx1/lim1 complex. Interferes with Spemann organizer function and suppresses secondary axis formation induced by ldb1 and lhx1/lim1. This Xenopus laevis (African clawed frog) protein is E3 ubiquitin-protein ligase RNF12-A (rnf12-a).